The primary structure comprises 1012 residues: Ubiquitin-like modifier-activating enzyme 7 (1012 aa).

The stretch at 23–159 is one 1-1 repeat; it reads GSPAMQRIQG…DTRGLVGQLF (137 aa). The interval 23–575 is 2 approximate repeats; it reads GSPAMQRIQG…GTWGSATVFM (553 aa). Serine 266 is modified (phosphoserine). Residues 423–575 form a 1-2 repeat; the sequence is GAGFQEKLRR…GTWGSATVFM (153 aa). 442-471 lines the ATP pocket; the sequence is AIGCELLKVFALVGLGAGNSGGLTVVDMDH. The active-site Glycyl thioester intermediate is the cysteine 599.

The protein belongs to the ubiquitin-activating E1 family. In terms of assembly, (Microbial infection) Interacts with human cytomegalovirus proteins NEC2/UL50 and UL26; these interactions inhibit ISGylation and cause proteasomal degradation of UBA7. As to quaternary structure, (Microbial infection) Interacts with rotavirus non-structural protein 5 (NSP5); this interaction promotes UBA7 proteasomal degradation. Monomer. Binds and is involved in the conjugation of G1P2/ISG15. Post-translationally, ISGylated. In terms of processing, ubiquitinated by RNF170. Expressed in a variety of normal and tumor cell types, but is reduced in lung cancer cell lines.

It is found in the cytoplasm. The protein resides in the nucleus. The protein operates within protein modification; protein ubiquitination. E1-activating enzyme that catalyzes the covalent conjugation of the ubiquitin-like protein product of ISG15 to additional interferon stimulated proteins (ISGs) as well as other cellular proteins such as P53 in a process termed protein ISGylation. Plays an essential role in antiviral immunity together with ISG15 by restricting the replication of many viruses including rabies virus, influenza virus, sindbis virus, rotavirus or human cytomegalovirus. For example, ISG15 modification of influenza A protein NS1 disrupts the association of the NS1 with importin-alpha leading to NS1 nuclear import inhibition. ISGylation of human cytomegalovirs protein UL26 regulates its stability and inhibits its activities to suppress NF-kappa-B signaling. This chain is Ubiquitin-like modifier-activating enzyme 7, found in Homo sapiens (Human).